Here is a 182-residue protein sequence, read N- to C-terminus: N-alpha-acetyltransferase daf-31 (182 aa).

The N-acetyltransferase domain maps to 1 to 152 (MNIRCARVDD…DAYAMRRDLA (152 aa)). The tract at residues 162-182 (PADREAYTTAKTTDDKKKNRS) is disordered.

This sequence belongs to the acetyltransferase family. ARD1 subfamily. Component of the N-terminal acetyltransferase A (NatA) complex. Expressed in head and tail hypodermal cells, hypodermal seam cells, pharynx, intestine and head and tail neurons.

It catalyses the reaction N-terminal glycyl-[protein] + acetyl-CoA = N-terminal N(alpha)-acetylglycyl-[protein] + CoA + H(+). The catalysed reaction is N-terminal L-alanyl-[protein] + acetyl-CoA = N-terminal N(alpha)-acetyl-L-alanyl-[protein] + CoA + H(+). The enzyme catalyses N-terminal L-seryl-[protein] + acetyl-CoA = N-terminal N(alpha)-acetyl-L-seryl-[protein] + CoA + H(+). It carries out the reaction N-terminal L-valyl-[protein] + acetyl-CoA = N-terminal N(alpha)-acetyl-L-valyl-[protein] + CoA + H(+). It catalyses the reaction N-terminal L-cysteinyl-[protein] + acetyl-CoA = N-terminal N(alpha)-acetyl-L-cysteinyl-[protein] + CoA + H(+). The catalysed reaction is N-terminal L-threonyl-[protein] + acetyl-CoA = N-terminal N(alpha)-acetyl-L-threonyl-[protein] + CoA + H(+). Functionally, catalytic subunit of the N-terminal acetyltransferase A (NatA) complex which displays alpha (N-terminal) acetyltransferase activity. Plays a role in regulating larval development, metabolism and longevity. Functions downstream or alongside daf-3, daf-12 and daf-16 in the dauer formation pathway. Functions upstream of daf-15 to enable animal development. The sequence is that of N-alpha-acetyltransferase daf-31 from Caenorhabditis elegans.